The sequence spans 761 residues: Disintegrin and metalloproteinase domain-containing protein 24 (761 aa).

The signal sequence occupies residues 1 to 34 (MVAMSEALVHARITLLQAWLRMLLFSSVWPPTWC). Residues 35-200 (AEYKGPPETV…GKSTRMQSIY (166 aa)) constitute a propeptide that is removed on maturation. Residues 35–697 (AEYKGPPETV…SKKDAPEKPN (663 aa)) lie on the Extracellular side of the membrane. A glycan (N-linked (GlcNAc...) asparagine) is linked at N140. Positions 172–179 (MRCGLTDE) match the Cysteine switch motif. C174 provides a ligand contact to Zn(2+). The 193-residue stretch at 208-400 (LYIKLALVID…KSCIHREPRP (193 aa)) folds into the Peptidase M12B domain. Residues N227 and N301 are each glycosylated (N-linked (GlcNAc...) asparagine). Intrachain disulfides connect C323/C393, C357/C379, C359/C364, C465/C485, C635/C646, C640/C652, and C654/C663. Zn(2+) is bound at residue H342. E343 is an active-site residue. H346 and H352 together coordinate Zn(2+). N-linked (GlcNAc...) asparagine glycosylation is found at N378, N390, and N479. One can recognise a Disintegrin domain in the interval 406-493 (LKVCGNGIVE…ECPEDLFVQD (88 aa)). Residues 631 to 664 (WVNDCTPETCNMKGVCNNKQHCHCDVGWSPPNCQ) enclose the EGF-like domain. The helical transmembrane segment at 698-718 (VIIWLLPIICVAVVLSVLFCL) threads the bilayer. The Cytoplasmic segment spans residues 719-761 (SGATKKSREAAASQPAEERVKPPYEGAEPSYETVKPPDEWANP). The segment at 725 to 761 (SREAAASQPAEERVKPPYEGAEPSYETVKPPDEWANP) is disordered.

As to quaternary structure, monomer. The cofactor is Zn(2+). In terms of processing, the prodomain is removed during sperm passage through the caput epididymis after the protein has reached the cell surface. Not processed in the secretory pathway. As to expression, expressed exclusively in testis and more specifically on the surface of mature sperm (at protein level).

It is found in the membrane. Plasma membrane protease present on mature sperm that may be involved in sperm function during epididymal maturation and/or fertilization. The polypeptide is Disintegrin and metalloproteinase domain-containing protein 24 (Mus musculus (Mouse)).